The primary structure comprises 1818 residues: WREKLEAEVQRQNLYQERVAHMESSLGQARERLGRAVRGAREGRLELQQLQAERDGLQERREALEQRLEGRWQDRLQATEKFQLAVEALEQEKQGLQSQIAQILEGGQQLAHLKMSLSLEVATYRTLLEAENSRLQTPGRSSQASLGFQDPKLKLRFLGTPENQHLGSVLPVLSPTPLPSPLPDTLETPVTAFLKTQEFLQARIPTLASTPIPPMTEAPCLAKAEVRAQDAPLSLLQTQGERQQAPEPLWAKATASVSTGVLTELEEAGGQQPGHFPEDATASAPSLSPHHPVLEAKDGDSTESRGSSIFQEDEGQIWELVEKEAAIELKVESSLAQETQEDGLHTEEIQDSQGPLQKETLEALGEEPLMSLKIQNHETPGKENCNSLRSVDENQGTLKSPEEEKQTLLKSLEEKDVEVEKTLEKGVPELSKPLGKEDPRIEDQELMSPEGTLETLSFIGKRNEEVVRSSEEENIESLAAFKKESQHPLGCPEEEIQRVERLIEKEGQESLSSPEEEDQETDRPLEKENGEPLKPVEEEDQLFETLIEKEGQESLSSPEEEDQETDRPLEKEEDQLVERLVEKEGQESLSSPEEEDQETDRPLEKENGEPLKPVEEEDQLFETLIEKEGQESLSSPEEEDQETDRPLEKEEDQLVERLVEKEGQESLSSPEEEDQETDRPLEKEEDQLVETLIEKQGQECLSSPEEEDQETDRPLEKEEDQRVERLIEKEGQESLSSPEEEDQETYRLLEKENGEPLKPVEEEDQRVERLIEKEDQESLSSLKEEDQRIVKTLERENWESLRSLDENLDTVMPLESKNQKPLKSLEAEEEQRIVKPLEKVSQDSIGSLEKENVELLRSLEDDQITESLLKKGTQESLESHEDRNQETQDPQRFLEEEGQGIVKQLEKENQGFLGSLEEEKVVKRSLERENHEPLSSVEKDWVTESLLERESQDSGKSLEGQEAFRCLGKEDPESLQFPEVQDQEIQRSLQQETQQTLGALGDEQMASEPPEKVGPELLKFLGNGQEIVRSLEEQNQESLVSVKETSVETAKSSDMEDIEPLKSADEDLEIINSAGAQESLWSMEVTRETTRPLEKEVQESLGFVGGNQEILRPLERGNEELGSLGKWNLEAVDSPEAVEEGRQPLGEEACLEMGEHQEPPRSLGEVEQGLPGSGNQQKWEDRAVENAAADQGPTLGRTGIESEDEAELPLSGQGEKEEDAEERELQLDAMGEAWSLASSEPQEPRVPSEGGSAGAPQGLEGQSEQVGVLGVPVGQGMPEVTEPLLQEDVAQAGKRDPIELTLGSDAATRAGLGLEQEVAGSGGSRHLAREEAIHPSLGEESVEAKIAHDLEGPGKEPKEAGALESEISELPRTSSDVLESKGCKQSEPVLGWAVEEASVEASDHEGSDAPEPRPSETEGDEGAQAALAPPGPKLMEPCSPTPILKDAYEWQPQAEGTRETGRQLEGGSASLERVEDEQEFGLGGIPEGLQDWEESREESEADELGETLPDSTPLGLYLRSPTSPKWDQAGEQRLSPQGEARKEGWGPAVPAAQGLSNPPGEEERGHDSDLSSEEFEDLGTEASLLPGLPKEVADHLGQVPPGPEPECWDQGGESDGFADEEESGEEGEEEEHEDGTESGAQWWGSGPSKVQHVTQRGDLQEHESVGISGPWDDGWRGAAAGISVTGLETESQDSAEPSGSEVSESVSSEGEDQAPDHLDTPQGVTNVVPGAGDTFGISGQAPNLESEHMNGRLENGLEQSEGQGVLDRHQDQGHPSQQQEVGALKAPLLGSPVHRGPSQSLEFPLSGADRDSWSSGED.

The interval 1–14 is coil 1B; sequence WREKLEAEVQRQNL. The IF rod domain occupies 1–135; sequence WREKLEAEVQ…TLLEAENSRL (135 aa). Residues 15 to 17 form a linker 2 region; that stretch reads YQE. The segment at 18–135 is coil 2B; it reads RVAHMESSLG…TLLEAENSRL (118 aa). Serine 133 is subject to Phosphoserine. The tract at residues 136–1818 is tail; that stretch reads QTPGRSSQAS…DRDSWSSGED (1683 aa). Phosphothreonine is present on residues threonine 137 and threonine 160. The residue at position 180 (serine 180) is a Phosphoserine. Position 210 is a phosphothreonine (threonine 210). Disordered stretches follow at residues 266-309, 336-355, 377-451, and 480-787; these read EEAG…GSSI, AQETQEDGLHTEEIQDSQGP, HETP…SPEG, and AFKK…EEDQ. Phosphoserine is present on serine 288. A compositionally biased stretch (basic and acidic residues) spans 292–303; it reads PVLEAKDGDSTE. Residues 382 to 398 are compositionally biased toward polar residues; it reads KENCNSLRSVDENQGTL. Residues serine 390 and serine 400 each carry the phosphoserine modification. 2 stretches are compositionally biased toward basic and acidic residues: residues 400-427 and 434-443; these read SPEEEKQTLLKSLEEKDVEVEKTLEKGV and LGKEDPRIED. Serine 448 is modified (phosphoserine). Residues 495–508 are compositionally biased toward basic and acidic residues; the sequence is EIQRVERLIEKEGQ. Serine 513 carries the post-translational modification Phosphoserine. Basic and acidic residues-rich tracts occupy residues 521-536 and 565-586; these read TDRPLEKENGEPLKPV and TDRPLEKEEDQLVERLVEKEGQ. Position 591 is a phosphoserine (serine 591). Composition is skewed to basic and acidic residues over residues 599–614, 643–664, and 711–732; these read TDRPLEKENGEPLKPV, TDRPLEKEEDQLVERLVEKEGQ, and TDRPLEKEEDQRVERLIEKEGQ. Serine 737 bears the Phosphoserine mark. Positions 744 to 773 are enriched in basic and acidic residues; that stretch reads ETYRLLEKENGEPLKPVEEEDQRVERLIEK. Residues serine 803 and serine 824 each carry the phosphoserine modification. Residues 866–900 are disordered; that stretch reads ESLLKKGTQESLESHEDRNQETQDPQRFLEEEGQG. Residues 868-886 show a composition bias toward basic and acidic residues; sequence LLKKGTQESLESHEDRNQE. Phosphoserine is present on residues serine 915 and serine 957. A disordered region spans residues 945-998; it reads SLLERESQDSGKSLEGQEAFRCLGKEDPESLQFPEVQDQEIQRSLQQETQQTLG. The span at 986 to 997 shows a compositional bias: polar residues; it reads QRSLQQETQQTL. Residue lysine 1043 forms a Glycyl lysine isopeptide (Lys-Gly) (interchain with G-Cter in SUMO1); alternate linkage. Lysine 1043 participates in a covalent cross-link: Glycyl lysine isopeptide (Lys-Gly) (interchain with G-Cter in SUMO2); alternate. Serine 1052, serine 1063, serine 1073, serine 1123, serine 1134, serine 1162, and serine 1238 each carry phosphoserine. Disordered regions lie at residues 1134 to 1262 and 1334 to 1818; these read SPEA…LEGQ and HPSL…SGED. Basic and acidic residues-rich tracts occupy residues 1342-1361 and 1401-1416; these read VEAKIAHDLEGPGKEPKEAG and ASDHEGSDAPEPRPSE. Residues 1490–1505 are compositionally biased toward acidic residues; that stretch reads QDWEESREESEADELG. Phosphoserine occurs at positions 1495, 1499, and 1523. The segment covering 1570–1579 has biased composition (acidic residues); that stretch reads LSSEEFEDLG. Phosphoserine occurs at positions 1614 and 1623. Positions 1616-1636 are enriched in acidic residues; the sequence is GFADEEESGEEGEEEEHEDGT. Over residues 1686–1697 the composition is skewed to polar residues; the sequence is GLETESQDSAEP. Phosphoserine is present on residues serine 1698, serine 1700, serine 1791, serine 1814, and serine 1815. Residues 1698–1708 show a composition bias toward low complexity; it reads SGSEVSESVSS.

Belongs to the intermediate filament family. As to quaternary structure, interacts with FHOD3. Forms homodimers and homotetramers in vitro. In mixtures with other intermediate filament proteins such as vimentin and alpha-internexin, preferentially forms heterodimers which can assemble to form intermediate filaments if nestin does not exceed 25%. Constitutively phosphorylated. This increases during mitosis when the cytoplasmic intermediate filament network is reorganized.

Its function is as follows. Required for brain and eye development. Promotes the disassembly of phosphorylated vimentin intermediate filaments (IF) during mitosis and may play a role in the trafficking and distribution of IF proteins and other cellular factors to daughter cells during progenitor cell division. Required for survival, renewal and mitogen-stimulated proliferation of neural progenitor cells. This is Nestin from Mesocricetus auratus (Golden hamster).